A 179-amino-acid polypeptide reads, in one-letter code: Arginine repressor (179 aa).

It belongs to the ArgR family.

Its subcellular location is the cytoplasm. It functions in the pathway amino-acid biosynthesis; L-arginine biosynthesis [regulation]. Functionally, regulates arginine biosynthesis genes. This is Arginine repressor from Renibacterium salmoninarum (strain ATCC 33209 / DSM 20767 / JCM 11484 / NBRC 15589 / NCIMB 2235).